Consider the following 201-residue polypeptide: Small ribosomal subunit protein uS4c (201 aa).

The S4 RNA-binding domain occupies 89–150 (MRLDNILFRL…KQRSKVLIQN (62 aa)).

The protein belongs to the universal ribosomal protein uS4 family. Part of the 30S ribosomal subunit. Contacts protein S5. The interaction surface between S4 and S5 is involved in control of translational fidelity.

The protein localises to the plastid. The protein resides in the chloroplast. One of the primary rRNA binding proteins, it binds directly to 16S rRNA where it nucleates assembly of the body of the 30S subunit. Its function is as follows. With S5 and S12 plays an important role in translational accuracy. This chain is Small ribosomal subunit protein uS4c (rps4), found in Dioscorea elephantipes (Elephant's foot yam).